A 242-amino-acid polypeptide reads, in one-letter code: C-reactive protein 3.3 (242 aa).

An N-terminal signal peptide occupies residues 1–24 (MKTFHGPTCGTAVSLCLLLFLTSA). One can recognise a Pentraxin (PTX) domain in the interval 30–241 (ITSKVKFPPS…GVVLSPNEIC (212 aa)). Residues Thr60 and Tyr63 each contribute to the phosphocholine site. 2 cysteine pairs are disulfide-bonded: Cys62–Cys125 and Cys112–Cys144. Ca(2+) is bound by residues Asp85 and Asn86. The N-linked (GlcNAc...) asparagine glycan is linked to Asn147. Gln169, Asp170, and Gln180 together coordinate Ca(2+). The cysteines at positions 207 and 241 are disulfide-linked.

Belongs to the pentraxin family. In terms of assembly, homopentamer. Pentraxin (or pentaxin) have a discoid arrangement of 5 non-covalently bound subunits. The cofactor is Ca(2+).

It localises to the secreted. In terms of biological role, might serve the role of immunoglobulins. This is C-reactive protein 3.3 from Limulus polyphemus (Atlantic horseshoe crab).